A 155-amino-acid polypeptide reads, in one-letter code: FHA domain-containing protein FhaB (155 aa).

A helical transmembrane segment spans residues 6–28; that stretch reads LQLTRVGFLLLLWLFIWSVLRIL. Thr36 carries the phosphothreonine modification. Residues 83-132 enclose the FHA domain; that stretch reads VLIGRADDSTLVLTDDYASTRHARLSPRGSEWYVEDLGSTNGTYLDRAKV.

In terms of processing, phosphorylated by PknB. Dephosphorylated by PstP.

The protein localises to the cell membrane. This Mycolicibacterium smegmatis (strain ATCC 700084 / mc(2)155) (Mycobacterium smegmatis) protein is FHA domain-containing protein FhaB (fhaB).